The sequence spans 62 residues: DNA-binding protein 7 (62 aa).

The protein belongs to the 7 kDa DNA-binding/endoribonuclease P2 family. As to quaternary structure, monomer.

It is found in the cytoplasm. Functionally, can constrain negative DNA supercoils. May be involved in maintaining the integrity of the genome at high temperature. The polypeptide is DNA-binding protein 7 (Metallosphaera sedula (strain ATCC 51363 / DSM 5348 / JCM 9185 / NBRC 15509 / TH2)).